The sequence spans 218 residues: Redox-sensing transcriptional repressor Rex (218 aa).

Residues Trp-25–Val-64 constitute a DNA-binding region (H-T-H motif). Position 99–104 (Gly-99–Gly-104) interacts with NAD(+).

This sequence belongs to the transcriptional regulatory Rex family. As to quaternary structure, homodimer.

The protein resides in the cytoplasm. Modulates transcription in response to changes in cellular NADH/NAD(+) redox state. The polypeptide is Redox-sensing transcriptional repressor Rex (Porphyromonas gingivalis (strain ATCC BAA-308 / W83)).